Here is a 227-residue protein sequence, read N- to C-terminus: Orotidine 5'-phosphate decarboxylase (227 aa).

Residues Asp12, Lys34, 61 to 70, Thr117, Arg178, Gln187, Gly207, and Arg208 each bind substrate; that span reads DLKLHDIPNT. The active-site Proton donor is the Lys63.

The protein belongs to the OMP decarboxylase family. Type 1 subfamily. Homodimer.

The enzyme catalyses orotidine 5'-phosphate + H(+) = UMP + CO2. It functions in the pathway pyrimidine metabolism; UMP biosynthesis via de novo pathway; UMP from orotate: step 2/2. In terms of biological role, catalyzes the decarboxylation of orotidine 5'-monophosphate (OMP) to uridine 5'-monophosphate (UMP). The sequence is that of Orotidine 5'-phosphate decarboxylase from Anaeromyxobacter sp. (strain K).